A 102-amino-acid polypeptide reads, in one-letter code: uncharacterized protein (102 aa).

The interval 1-43 (MNNAHEENISSVTGFKSTSGSPAIGSSLPGRSGEGRSSSSSSG) is disordered. Polar residues predominate over residues 9-21 (ISSVTGFKSTSGS). Over residues 25 to 43 (GSSLPGRSGEGRSSSSSSG) the composition is skewed to low complexity.

This is an uncharacterized protein from Saccharomyces cerevisiae (strain ATCC 204508 / S288c) (Baker's yeast).